Reading from the N-terminus, the 151-residue chain is Small ribosomal subunit protein uS11 (151 aa).

The tract at residues 129 to 151 (IEDVTPVPSDSTRRKGGRRGRRL) is disordered. The segment covering 142–151 (RKGGRRGRRL) has biased composition (basic residues).

This sequence belongs to the universal ribosomal protein uS11 family.

The sequence is that of Small ribosomal subunit protein uS11 (RPS14) from Procambarus clarkii (Red swamp crayfish).